The primary structure comprises 508 residues: Pyruvate kinase (508 aa).

Arginine 56 is a substrate binding site. K(+) contacts are provided by asparagine 58, serine 60, aspartate 90, and threonine 91. 58–61 (NFSH) contacts ATP. ATP is bound by residues arginine 97 and lysine 185. Glutamate 251 contributes to the Mg(2+) binding site. Residues glycine 274, aspartate 275, and threonine 307 each coordinate substrate. Residue aspartate 275 participates in Mg(2+) binding.

This sequence belongs to the pyruvate kinase family. In terms of assembly, homotetramer. Mg(2+) serves as cofactor. The cofactor is K(+).

The enzyme catalyses pyruvate + ATP = phosphoenolpyruvate + ADP + H(+). It participates in carbohydrate degradation; glycolysis; pyruvate from D-glyceraldehyde 3-phosphate: step 5/5. Its activity is regulated as follows. Regulated by phosphoenolpyruvate substrate and is allosterically activated by ribose-5-phosphate, AMP and other nucleoside monophosphates but not by fructose-1,6-bisphosphate. In Mycoplasma pneumoniae (strain ATCC 29342 / M129 / Subtype 1) (Mycoplasmoides pneumoniae), this protein is Pyruvate kinase (pyk).